The following is a 357-amino-acid chain: N-methyltransferase dtpB (357 aa).

It belongs to the methyltransferase superfamily.

It functions in the pathway alkaloid biosynthesis. In terms of biological role, N-methyltransferase; part of the gene cluster that mediates the biosynthesis of the dimeric diketopiperazine alkaloid ditryptophenaline. The nonribosomal peptide synthase dtpA accepts L-tryptophan and L-phenylalanine as its substrates and forms the phenylalanyl-tryptophanyl cyclic dipeptide product cyclophenylalanyltryptophenyl. The N-methyltransferase dtpB is responsible for the N-methylation of cyclophenylalanyltryptophenyl to yield cyclo-N-methylphenylalanyltryptophenyl. The cytochrome P450 monooxygenase is responsible not only for pyrroloindole ring formation but also for concurrent dimerization of N-methylphenylalanyltryptophanyl diketopiperazine monomers into a homodimeric product. This Aspergillus flavus (strain ATCC 200026 / FGSC A1120 / IAM 13836 / NRRL 3357 / JCM 12722 / SRRC 167) protein is N-methyltransferase dtpB.